A 490-amino-acid polypeptide reads, in one-letter code: Trigger factor (490 aa).

The PPIase FKBP-type domain maps to 161-247 (GDQVIVDIEA…VHEVKEAELP (87 aa)). A compositionally biased stretch (low complexity) spans 441–460 (AEPAEGTEPAAEEAVTAPEV). The disordered stretch occupies residues 441–490 (AEPAEGTEPAAEEAVTAPEVVDGETTPASESAESLAVTETGSRADDDQAS). The span at 466–481 (TPASESAESLAVTETG) shows a compositional bias: polar residues.

It belongs to the FKBP-type PPIase family. Tig subfamily.

Its subcellular location is the cytoplasm. The catalysed reaction is [protein]-peptidylproline (omega=180) = [protein]-peptidylproline (omega=0). Functionally, involved in protein export. Acts as a chaperone by maintaining the newly synthesized protein in an open conformation. Functions as a peptidyl-prolyl cis-trans isomerase. This is Trigger factor from Thermomicrobium roseum (strain ATCC 27502 / DSM 5159 / P-2).